The sequence spans 439 residues: Probable aspartic proteinase GIP2 (439 aa).

An N-terminal signal peptide occupies residues 1 to 23 (MASSCCLHAILLCSLLFITSTTA). The Peptidase A1 domain occupies 47-420 (YLTQIQQRTP…DLARSRLGFT (374 aa)). Residues N116, N280, N323, and N434 are each glycosylated (N-linked (GlcNAc...) asparagine).

The protein belongs to the peptidase A1 family. In terms of assembly, interacts with the Phytophtora parasitica xyloglucanase XEG1 and xyloglucanase-like XLP1. Possesses stronger binding affinity with XLP1, a truncated paralog of P.parasitica XEG1 which has no enzyme activity.

The protein localises to the secreted. It localises to the extracellular space. Its subcellular location is the apoplast. Involved in plant defense against Phytophtora parasitica. Contributes positively to Nicotiana resistance against P.parasitica. Binds the P.parasitica xyloglucanase XEG1 and inhibits its cell wall degrading enzyme activity and its contribution as P.parasitica virulence factor. XEG1 acts as an important virulence factor during P.parasitica infection but also acts as a pathogen-associated molecular pattern (PAMP) in Nictotiana species, where it can trigger defense responses including cell death. Its function is as follows. (Microbial infection) Possesses stronger binding affinity with XLP1, a truncated paralog of P.parasitica XEG1 which has no enzyme activity. Is impaired in its inhibitor activity towards the P.parasitica xyloglucanase XEG1 when hijacked by XLP1 binding. In Nicotiana benthamiana, this protein is Probable aspartic proteinase GIP2.